The sequence spans 1762 residues: Kinase D-interacting substrate of 220 kDa (1762 aa).

Topologically, residues 1–508 are cytoplasmic; sequence MSVLISQSVI…WLIVFLTLLL (508 aa). ANK repeat units lie at residues 45–74, 78–107, 111–140, 145–174, 178–207, 211–240, 244–273, 277–306, 310–339, 343–372, and 376–405; these read AAEQ…NWTA, ASKE…GWTA, ACYK…SVYP, AGRG…TTPL, ARKG…MTAL, VKGG…NTAL, SKEG…DTVL, VRGG…KTAL, VEKG…ETPL, TKMR…DTPL, and IRGR…KAGE. The 514-residue stretch at 440 to 953 folds into the KAP NTPase domain; the sequence is YDLYSSALAD…NIVSVTGRLL (514 aa). A helical membrane pass occupies residues 509–529; sequence CGGLGLVFAFTVDTNLAIAIS. Residues 530-533 are Extracellular-facing; it reads LSFL. Residues 534–554 traverse the membrane as a helical segment; sequence ALIYIFFIVIYFGGRREGESW. The Cytoplasmic segment spans residues 555–668; that stretch reads NWAWALSTRL…SFVIFLFIVG (114 aa). The helical transmembrane segment at 669-689 threads the bilayer; sequence CIIAGITLLAIFRVDPKHLTV. Over 690–696 the chain is Extracellular; the sequence is NAILISI. The helical transmembrane segment at 697-717 threads the bilayer; sequence ASVVGLAFVLNCRTWWQVLDS. Residues 718 to 1680 are Cytoplasmic-facing; that stretch reads LLNSQRKRLH…TPSTVTLNNN (963 aa). A phosphoserine mark is found at serine 882 and serine 885. The residue at position 914 (threonine 914) is a Phosphothreonine. Serine 918 carries the post-translational modification Phosphoserine; by PKD. The mediates interaction with CRKL stretch occupies residues 1089–1092; the sequence is PRPP. A phosphoserine mark is found at serine 1163, serine 1288, serine 1344, serine 1351, serine 1353, serine 1354, and serine 1357. Disordered regions lie at residues 1279–1305, 1336–1358, 1390–1440, and 1452–1556; these read DPRF…HTEL, RHSN…LNSQ, EGGT…DGRK, and YSSS…EPIR. Positions 1338-1350 are enriched in polar residues; that stretch reads SNLSWQSQTRRTP. Over residues 1395–1422 the composition is skewed to low complexity; the sequence is SSTISGRSSPHSTYYIGQSSSGGSIHST. Over residues 1423 to 1440 the composition is skewed to basic and acidic residues; the sequence is LEQERGKEGELKQEDGRK. Polar residues predominate over residues 1452–1462; sequence YSSSGVSTNEA. A phosphoserine mark is found at serine 1513, serine 1518, serine 1547, and serine 1566. Residues 1514–1524 show a composition bias toward acidic residues; the sequence is DEDESGTEESD. The segment covering 1529–1553 has biased composition (basic and acidic residues); sequence LKDDKDKKAEGKAERVCKSPEHSAE. Residues 1571–1628 are disordered; that stretch reads DKKDSSDSGVRSNESSPNHSLHNEAADDSQLEKANLIELEDEGHSGKRGMPHSLSGLQ. Residues 1579–1590 are compositionally biased toward polar residues; the sequence is GVRSNESSPNHS. Residues serine 1615 and serine 1625 each carry the phosphoserine modification. The residue at position 1671 (threonine 1671) is a Phosphothreonine. The residue at position 1673 (serine 1673) is a Phosphoserine. Phosphothreonine is present on threonine 1676. The interval 1704–1762 is disordered; sequence ILRPGPSPNPTAVQNENLKSMAHKRSQRSSYTRLSKDASELHAASSESTGFGEERESIL. Positions 1757 to 1762 match the PDZ-binding motif; it reads ERESIL.

As to quaternary structure, found in a complex, at least composed of KIDINS220, MAGI2, NTRK1 and RAPGEF2; the complex is mainly formed at late endosomes in a nerve growth factor (NGF)-dependent manner. Interacts with RAPGEF2; the interaction is strengthened after NGF stimulation. Isoform 2 interacts (via C-terminal domain) with MAGI2 isoform 1 (via PDZ domain). Interacts with NTRK1, NTRK2, NTRK3, ERKL and NGFR. Can form a ternary complex with NGFR and NTRK1 and this complex is affected by the expression levels of KIDINS220/ARMS. An increase in KIDINS220/ARMS expression leads to a decreased association of NGFR and NTRK1. Interacts (via PDZ-binding motif) with SNTA1 and SNTB2 (via PDZ domains). Interacts with EPHA4 and PRKD1. Tyrosine phosphorylated by NTRK1, NTRK2, EPHB2 and EPHA4. Phosphorylation at Ser-918 is induced by phorbol ester treatment. Phosphorylation by NTRK2 is induced by brain-derived neurotrophic factor (BDNF) and neurotrophin-4/5. Phosphorylation by NTRK1 is induced by nerve growth factor (NGF). In terms of tissue distribution, expressed in developing nervous system and in highly plastic areas of the adult brain. Also expressed in neuroendocrine cells, where it concentrates at the tip of neurites. Expressed in developing muscle and is concentrated at the neuromuscular junction (NMS). SNTA1 can regulate its localization in the NMS.

The protein localises to the membrane. It localises to the late endosome. Its function is as follows. Promotes a prolonged MAP-kinase signaling by neurotrophins through activation of a Rap1-dependent mechanism. Provides a docking site for the CRKL-C3G complex, resulting in Rap1-dependent sustained ERK activation. May play an important role in regulating postsynaptic signal transduction through the syntrophin-mediated localization of receptor tyrosine kinases such as EPHA4. In cooperation with SNTA1 can enhance EPHA4-induced JAK/STAT activation. Plays a role in nerve growth factor (NGF)-induced recruitment of RAPGEF2 to late endosomes and neurite outgrowth. May play a role in neurotrophin- and ephrin-mediated neuronal outgrowth and in axon guidance during neural development and in neuronal regeneration. This Rattus norvegicus (Rat) protein is Kinase D-interacting substrate of 220 kDa (Kidins220).